Consider the following 154-residue polypeptide: Transcriptional repressor NrdR (154 aa).

The segment at 3–34 (CPFCGNDETKVLESRQVEEGTAVRRRRECERC) is a zinc-finger region. The region spanning 49 to 139 (LIVVKKDGRR…VYREFKDVQR (91 aa)) is the ATP-cone domain.

The protein belongs to the NrdR family. Requires Zn(2+) as cofactor.

Negatively regulates transcription of bacterial ribonucleotide reductase nrd genes and operons by binding to NrdR-boxes. The chain is Transcriptional repressor NrdR from Desulfitobacterium hafniense (strain DSM 10664 / DCB-2).